The sequence spans 164 residues: S-ribosylhomocysteine lyase (164 aa).

The Fe cation site is built by His-61, His-65, and Cys-131.

Belongs to the LuxS family. In terms of assembly, homodimer. Fe cation serves as cofactor.

It catalyses the reaction S-(5-deoxy-D-ribos-5-yl)-L-homocysteine = (S)-4,5-dihydroxypentane-2,3-dione + L-homocysteine. Involved in the synthesis of autoinducer 2 (AI-2) which is secreted by bacteria and is used to communicate both the cell density and the metabolic potential of the environment. The regulation of gene expression in response to changes in cell density is called quorum sensing. Catalyzes the transformation of S-ribosylhomocysteine (RHC) to homocysteine (HC) and 4,5-dihydroxy-2,3-pentadione (DPD). The polypeptide is S-ribosylhomocysteine lyase (Bifidobacterium longum subsp. infantis (strain ATCC 15697 / DSM 20088 / JCM 1222 / NCTC 11817 / S12)).